The chain runs to 156 residues: ATP synthase subunit b (156 aa).

The chain crosses the membrane as a helical span at residues 5-27; that stretch reads ITLIGQMITFAIFVGFTMKFVWP.

This sequence belongs to the ATPase B chain family. F-type ATPases have 2 components, F(1) - the catalytic core - and F(0) - the membrane proton channel. F(1) has five subunits: alpha(3), beta(3), gamma(1), delta(1), epsilon(1). F(0) has three main subunits: a(1), b(2) and c(10-14). The alpha and beta chains form an alternating ring which encloses part of the gamma chain. F(1) is attached to F(0) by a central stalk formed by the gamma and epsilon chains, while a peripheral stalk is formed by the delta and b chains.

The protein resides in the cell inner membrane. Functionally, f(1)F(0) ATP synthase produces ATP from ADP in the presence of a proton or sodium gradient. F-type ATPases consist of two structural domains, F(1) containing the extramembraneous catalytic core and F(0) containing the membrane proton channel, linked together by a central stalk and a peripheral stalk. During catalysis, ATP synthesis in the catalytic domain of F(1) is coupled via a rotary mechanism of the central stalk subunits to proton translocation. In terms of biological role, component of the F(0) channel, it forms part of the peripheral stalk, linking F(1) to F(0). The sequence is that of ATP synthase subunit b from Francisella tularensis subsp. tularensis (strain SCHU S4 / Schu 4).